A 184-amino-acid polypeptide reads, in one-letter code: Ribosome maturation factor RimM (184 aa).

The 80-residue stretch at aspartate 101–leucine 180 folds into the PRC barrel domain.

The protein belongs to the RimM family. As to quaternary structure, binds ribosomal protein uS19.

It localises to the cytoplasm. An accessory protein needed during the final step in the assembly of 30S ribosomal subunit, possibly for assembly of the head region. Essential for efficient processing of 16S rRNA. May be needed both before and after RbfA during the maturation of 16S rRNA. It has affinity for free ribosomal 30S subunits but not for 70S ribosomes. This is Ribosome maturation factor RimM from Helicobacter pylori (strain Shi470).